A 101-amino-acid polypeptide reads, in one-letter code: Small integral membrane protein 14 (101 aa).

Positions 71–81 (SDRRTADDAAI) are enriched in basic and acidic residues. Positions 71-101 (SDRRTADDAAIEKPTGSSDDNTPPPPPPSAM) are disordered. The segment covering 92 to 101 (TPPPPPPSAM) has biased composition (pro residues).

The chain is Small integral membrane protein 14 from Caenorhabditis elegans.